A 354-amino-acid chain; its full sequence is Uroporphyrinogen decarboxylase (354 aa).

Substrate is bound by residues 27 to 31 (RQAGR), Asp-77, Tyr-154, Ser-209, and His-327.

The protein belongs to the uroporphyrinogen decarboxylase family. In terms of assembly, homodimer.

Its subcellular location is the cytoplasm. The catalysed reaction is uroporphyrinogen III + 4 H(+) = coproporphyrinogen III + 4 CO2. The protein operates within porphyrin-containing compound metabolism; protoporphyrin-IX biosynthesis; coproporphyrinogen-III from 5-aminolevulinate: step 4/4. Functionally, catalyzes the decarboxylation of four acetate groups of uroporphyrinogen-III to yield coproporphyrinogen-III. The polypeptide is Uroporphyrinogen decarboxylase (Shewanella baltica (strain OS223)).